We begin with the raw amino-acid sequence, 627 residues long: Chaperone protein HtpG (627 aa).

The segment at 1-343 is a; substrate-binding; that stretch reads MATQEFQAET…SEDLSLNISR (343 aa). Residues 344–553 form a b region; that stretch reads EMLQQDKQLK…EGEISIEMEK (210 aa). The tract at residues 554–627 is c; sequence VLQSMPNNQN…YTNNVCKIMS (74 aa).

This sequence belongs to the heat shock protein 90 family. In terms of assembly, homodimer.

The protein resides in the cytoplasm. Functionally, molecular chaperone. Has ATPase activity. This is Chaperone protein HtpG from Natranaerobius thermophilus (strain ATCC BAA-1301 / DSM 18059 / JW/NM-WN-LF).